The primary structure comprises 511 residues: ESX-1 secretion system protein EccD1 (511 aa).

Residue Ser2 is modified to N-acetylserine. Residues 2-143 (SAPAVAAGPT…PEFDRTALNR (142 aa)) lie on the Cytoplasmic side of the membrane. Residues 144-164 (FVGAAIPLLTAPVIGMAMRAW) form a helical membrane-spanning segment. The Periplasmic portion of the chain corresponds to 165-170 (WETGRS). Residues 171–191 (LWWPLAIGILGIAVLVGSFVA) traverse the membrane as a helical segment. Over 192–202 (NRFYQSGHLAE) the chain is Cytoplasmic. Residues 203 to 223 (CLLVTTYLLIATAAALAVPLP) traverse the membrane as a helical segment. Residues 224-227 (RGVN) are Periplasmic-facing. The helical transmembrane segment at 228–248 (SLGAPQVAGAATAVLFLTLMT) threads the bilayer. Residues 249-257 (RGGPRKRHE) are Cytoplasmic-facing. A helical transmembrane segment spans residues 258–278 (LASFAVITAIAVIAAAAAFGY). Residues 279–285 (GYQDWVP) are Periplasmic-facing. The chain crosses the membrane as a helical span at residues 286–306 (AGGIAFGLFIVTNAAKLTVAV). The Cytoplasmic portion of the chain corresponds to 307–367 (ARIALPPIPV…TERSKLAKQL (61 aa)). The next 2 helical transmembrane spans lie at 368 to 388 (LIGY…AVVV) and 389 to 409 (RGHF…VCGF). Over 410–420 (RSRLYAERWCA) the chain is Cytoplasmic. A helical membrane pass occupies residues 421–441 (WALLAATVAIPTGLTAKLIIW). Residues 442–444 (YPH) lie on the Periplasmic side of the membrane. Residues 445–465 (YAWLLLSVYLTVALVALVVVG) form a helical membrane-spanning segment. Over 466–482 (SMAHVRRVSPVVKRTLE) the chain is Cytoplasmic. The chain crosses the membrane as a helical span at residues 483–503 (LIDGAMIAAIIPMLLWITGVY). Topologically, residues 504-511 (DTVRNIRF) are periplasmic.

The protein belongs to the EccD/Snm4 family. Possibly a homodimer. Part of the ESX-1 / type VII secretion system (T7SS), which is composed of cytosolic and membrane components. The ESX-1 membrane complex is composed of EccB1, EccCa1, EccCb1, EccD1 and EccE1.

It localises to the cell inner membrane. Its function is as follows. Part of the ESX-1 specialized secretion system, which delivers several virulence factors to host cells during infection, including the key virulence factors EsxA (ESAT-6) and EsxB (CFP-10). The sequence is that of ESX-1 secretion system protein EccD1 from Mycobacterium tuberculosis (strain ATCC 25618 / H37Rv).